The following is a 318-amino-acid chain: NADH-ubiquinone oxidoreductase chain 1 (318 aa).

Transmembrane regions (helical) follow at residues 3–23 (MVNL…LTLI), 70–90 (MFII…IPLP), 100–120 (LAVL…LWSG), 146–166 (LAII…STLI), 171–191 (HTWL…STLA), 222–242 (LFFM…AILF), 253–273 (ELYT…FLWI), and 294–314 (LPLT…MAGI).

The protein belongs to the complex I subunit 1 family.

Its subcellular location is the mitochondrion inner membrane. The catalysed reaction is a ubiquinone + NADH + 5 H(+)(in) = a ubiquinol + NAD(+) + 4 H(+)(out). Its function is as follows. Core subunit of the mitochondrial membrane respiratory chain NADH dehydrogenase (Complex I) that is believed to belong to the minimal assembly required for catalysis. Complex I functions in the transfer of electrons from NADH to the respiratory chain. The immediate electron acceptor for the enzyme is believed to be ubiquinone. This chain is NADH-ubiquinone oxidoreductase chain 1 (MT-ND1), found in Pteropus vampyrus (Large flying fox).